The sequence spans 142 residues: Lysozyme 2 (142 aa).

The signal sequence occupies residues 1–20 (MLKLTLTILAAVLLVTPAFG). A C-type lysozyme domain is found at 21–142 (KVYTRCSLAR…HTLPSIDDCF (122 aa)). Intrachain disulfides connect Cys26/Cys141, Cys47/Cys131, Cys82/Cys98, and Cys94/Cys112. Residue Glu52 is part of the active site. N-linked (GlcNAc...) asparagine glycosylation occurs at Asn66. Asp70 is an active-site residue.

The protein belongs to the glycosyl hydrolase 22 family. In terms of tissue distribution, expressed only in the midgut where it is concentrated around the middle in all larval stages.

The protein resides in the secreted. It catalyses the reaction Hydrolysis of (1-&gt;4)-beta-linkages between N-acetylmuramic acid and N-acetyl-D-glucosamine residues in a peptidoglycan and between N-acetyl-D-glucosamine residues in chitodextrins.. In terms of biological role, lysozymes have primarily a bacteriolytic function. Shows antibacterial activity against Gram-positive bacterium M.luteus but shows no activity against Gram-negative bacterium E.coli. Likely to play a role in the eradication of ingested pathogens during their passage through the intestine. The sequence is that of Lysozyme 2 from Lucilia sericata (Green bottle fly).